Reading from the N-terminus, the 515-residue chain is G-protein coupled receptor 176 (515 aa).

Positions 1–16 (MGHNGSWISPNASEPH) are enriched in polar residues. The segment at 1–20 (MGHNGSWISPNASEPHNASG) is disordered. At 1–42 (MGHNGSWISPNASEPHNASGAEAAGVNRSALGEFGEAQLYRQ) the chain is on the extracellular side. Residues Asn-4, Asn-11, Asn-17, and Asn-27 are each glycosylated (N-linked (GlcNAc...) asparagine). Residues 43–63 (FTTTVQVVIFIGSLLGNFMVL) traverse the membrane as a helical segment. The Cytoplasmic segment spans residues 64–82 (WSTCRTTVFKSVTNRFIKN). Residues 83–103 (LACSGICASLVCVPFDIILST) traverse the membrane as a helical segment. The Extracellular portion of the chain corresponds to 104 to 118 (SPHCCWWIYTMLFCK). Residues 119-139 (VVKFLHKVFCSVTILSFPAIA) traverse the membrane as a helical segment. Residues 140-160 (LDRYYSVLYPLERKISDAKSR) lie on the Cytoplasmic side of the membrane. Residues 161 to 181 (ELVMYIWAHAVVASVPVFAVT) traverse the membrane as a helical segment. Residues 182 to 207 (NVADIYATSTCTEVWSNSLGHLVYVL) are Extracellular-facing. A helical membrane pass occupies residues 208 to 228 (VYNITTVIVPVVVVFLFLILI). The Cytoplasmic segment spans residues 229 to 267 (RRALSASQKKKVIIAALRTPQNTISIPYASQREAELHAT). The chain crosses the membrane as a helical span at residues 268–288 (LLSMVMVFILCSVPYATLVVY). Residues 289-299 (QTVLNVPDTSV) are Extracellular-facing. A helical membrane pass occupies residues 300–320 (FLLLTAVWLPKVSLLANPVLF). Topologically, residues 321–515 (LTVNKSVRKC…KVSIFPKVDS (195 aa)) are cytoplasmic.

It belongs to the G-protein coupled receptor 1 family.

It is found in the cell membrane. Orphan receptor involved in normal circadian rhythm behavior. Acts through the G-protein subclass G(z)-alpha and has an agonist-independent basal activity to repress cAMP production. This is G-protein coupled receptor 176 (GPR176) from Homo sapiens (Human).